The sequence spans 295 residues: Elongation factor Ts (295 aa).

The segment at 79 to 82 (TDFV) is involved in Mg(2+) ion dislocation from EF-Tu.

Belongs to the EF-Ts family.

The protein resides in the cytoplasm. Its function is as follows. Associates with the EF-Tu.GDP complex and induces the exchange of GDP to GTP. It remains bound to the aminoacyl-tRNA.EF-Tu.GTP complex up to the GTP hydrolysis stage on the ribosome. The sequence is that of Elongation factor Ts from Bacillus cereus (strain B4264).